A 128-amino-acid polypeptide reads, in one-letter code: Probable 4-amino-4-deoxy-L-arabinose-phosphoundecaprenol flippase subunit ArnF (128 aa).

Residues 1 to 2 are Cytoplasmic-facing; sequence MC. The helical transmembrane segment at 3-23 threads the bilayer; it reads LIWGLFSVIIASVAQLSLGFA. The Periplasmic portion of the chain corresponds to 24 to 35; that stretch reads ASHLPPMTHLWD. A helical transmembrane segment spans residues 36–56; sequence FIAALLAFGLDARILLLGLLG. At 57 to 76 the chain is on the cytoplasmic side; that stretch reads YLLSVFCWYKTLHKLALSKA. A helical transmembrane segment spans residues 77–97; that stretch reads YALLSMSYVLVWIASMVLPGW. Over 98-100 the chain is Periplasmic; it reads EGT. The chain crosses the membrane as a helical span at residues 101-121; sequence FSLKALLGVACIMSGLMLIFL. Residues 122-128 lie on the Cytoplasmic side of the membrane; sequence PTTKQRY.

Belongs to the ArnF family. In terms of assembly, heterodimer of ArnE and ArnF.

It localises to the cell inner membrane. It participates in bacterial outer membrane biogenesis; lipopolysaccharide biosynthesis. Translocates 4-amino-4-deoxy-L-arabinose-phosphoundecaprenol (alpha-L-Ara4N-phosphoundecaprenol) from the cytoplasmic to the periplasmic side of the inner membrane. This Shigella flexneri protein is Probable 4-amino-4-deoxy-L-arabinose-phosphoundecaprenol flippase subunit ArnF.